Consider the following 554-residue polypeptide: 3-(3-hydroxy-phenyl)propionate/3-hydroxycinnamic acid hydroxylase (554 aa).

FAD is bound by residues 17–46 (QVAI…VVEK) and 285–295 (FRIDRVLLAGD).

This sequence belongs to the PheA/TfdB FAD monooxygenase family. The cofactor is FAD.

It catalyses the reaction 3-(3-hydroxyphenyl)propanoate + NADH + O2 + H(+) = 3-(2,3-dihydroxyphenyl)propanoate + NAD(+) + H2O. The catalysed reaction is (2E)-3-(3-hydroxyphenyl)prop-2-enoate + NADH + O2 + H(+) = (2E)-3-(2,3-dihydroxyphenyl)prop-2-enoate + NAD(+) + H2O. Its pathway is aromatic compound metabolism; 3-phenylpropanoate degradation. Catalyzes the insertion of one atom of molecular oxygen into position 2 of the phenyl ring of 3-(3-hydroxyphenyl)propionate (3-HPP) and hydroxycinnamic acid (3HCI). This chain is 3-(3-hydroxy-phenyl)propionate/3-hydroxycinnamic acid hydroxylase, found in Escherichia coli O81 (strain ED1a).